A 468-amino-acid polypeptide reads, in one-letter code: Membrane-associated tyrosine- and threonine-specific cdc2-inhibitory kinase wee-1.1 (468 aa).

Over residues 25 to 42 the composition is skewed to basic and acidic residues; that stretch reads SKDEPNKLNTSRKLEVTT. Positions 25-63 are disordered; that stretch reads SKDEPNKLNTSRKLEVTTKKNQSNNKKRPPPINKARKSL. Positions 49 to 61 are enriched in basic residues; sequence NKKRPPPINKARK. The region spanning 106–357 is the Protein kinase domain; sequence FNFDKNLGKG…SELMKNHVVK (252 aa). Residues 112-120 and Lys135 contribute to the ATP site; that span reads LGKGSFGEV. Asp224 (proton acceptor) is an active-site residue. Mg(2+) is bound by residues Asn229 and Asp242. The segment at 425–453 is disordered; sequence EDEYEVFSPPRTPVKKSRYQQTMPEVSPP.

The protein belongs to the protein kinase superfamily. Ser/Thr protein kinase family. WEE1 subfamily. In the 12-13-cell embryo, expressed in the E blastomere. In the 16-cell embryo, expressed in the eight AB cells.

The protein resides in the nucleus. The catalysed reaction is L-seryl-[protein] + ATP = O-phospho-L-seryl-[protein] + ADP + H(+). It catalyses the reaction L-threonyl-[protein] + ATP = O-phospho-L-threonyl-[protein] + ADP + H(+). Its function is as follows. Acts as a negative regulator of entry into mitosis (G2 to M transition) by phosphorylation of the CDK1 kinase. In Caenorhabditis elegans, this protein is Membrane-associated tyrosine- and threonine-specific cdc2-inhibitory kinase wee-1.1 (wee-1.1).